Here is a 171-residue protein sequence, read N- to C-terminus: MIIYRDCISQDEMFSDIYKITEVANGLCLEVEGKMVSRKEGEIDEALIGGNASADGPEDCTEATVITGVDIVMNHHLQETSFTKESYKKYIKDYMKSIKARLEESKPERVKPFMTGAAEQVKHILGNFKNYQFFVGENMNPDGMVGLLDFREDGVTPYMIFFKDGLEMEKC.

In terms of domain architecture, TCTP spans 1–171 (MIIYRDCISQ…FKDGLEMEKC (171 aa)).

Belongs to the TCTP family. In terms of tissue distribution, expressed by the venom gland.

Its subcellular location is the secreted. Functionally, venom protein that causes edema, enhances vascular permeability and is likely related to the inflammatory activity of the venom. The protein is Translationally-controlled tumor protein homolog of Micrurus fulvius (Eastern coral snake).